The following is a 577-amino-acid chain: Arginine--tRNA ligase (577 aa).

Residues 132–142 carry the 'HIGH' region motif; it reads ANPTGPLHVGH.

The protein belongs to the class-I aminoacyl-tRNA synthetase family. In terms of assembly, monomer.

Its subcellular location is the cytoplasm. It catalyses the reaction tRNA(Arg) + L-arginine + ATP = L-arginyl-tRNA(Arg) + AMP + diphosphate. This is Arginine--tRNA ligase from Pelagibacter ubique (strain HTCC1062).